The primary structure comprises 89 residues: Small ribosomal subunit protein uS14A (89 aa).

Belongs to the universal ribosomal protein uS14 family. In terms of assembly, part of the 30S ribosomal subunit. Contacts proteins S3 and S10.

Binds 16S rRNA, required for the assembly of 30S particles and may also be responsible for determining the conformation of the 16S rRNA at the A site. This chain is Small ribosomal subunit protein uS14A, found in Staphylococcus saprophyticus subsp. saprophyticus (strain ATCC 15305 / DSM 20229 / NCIMB 8711 / NCTC 7292 / S-41).